The primary structure comprises 180 residues: Nucleoside triphosphate/diphosphate phosphatase (180 aa).

The active-site Proton donor is the Arg26. 6 residues coordinate Mg(2+): Asn90, Asp106, Asp108, Asp110, Asp123, and Glu126.

The protein belongs to the Ntdp family. The cofactor is Mg(2+).

The catalysed reaction is a ribonucleoside 5'-triphosphate + H2O = a ribonucleoside 5'-diphosphate + phosphate + H(+). It catalyses the reaction a ribonucleoside 5'-diphosphate + H2O = a ribonucleoside 5'-phosphate + phosphate + H(+). In terms of biological role, has nucleoside phosphatase activity towards nucleoside triphosphates and nucleoside diphosphates. This chain is Nucleoside triphosphate/diphosphate phosphatase, found in Staphylococcus saprophyticus subsp. saprophyticus (strain ATCC 15305 / DSM 20229 / NCIMB 8711 / NCTC 7292 / S-41).